The following is a 319-amino-acid chain: Formimidoylglutamase (319 aa).

6 residues coordinate Mn(2+): H131, D154, H156, D158, C248, and D250.

This sequence belongs to the arginase family. It depends on Mn(2+) as a cofactor.

It carries out the reaction N-formimidoyl-L-glutamate + H2O = formamide + L-glutamate. It participates in amino-acid degradation; L-histidine degradation into L-glutamate; L-glutamate from N-formimidoyl-L-glutamate (hydrolase route): step 1/1. In terms of biological role, catalyzes the conversion of N-formimidoyl-L-glutamate to L-glutamate and formamide. The sequence is that of Formimidoylglutamase from Legionella pneumophila subsp. pneumophila (strain Philadelphia 1 / ATCC 33152 / DSM 7513).